We begin with the raw amino-acid sequence, 67 residues long: PGPDVKCVCCQDGEECPCKGGECCITGTCCKEGDGLCCGKCSNAACKCADGCKCGSGCSCTLGNCTC.

Belongs to the metallothionein superfamily. Type 4 family.

In terms of biological role, metallothioneins have a high content of cysteine residues that bind various heavy metals. This is Metallothionein-B from Sphaerechinus granularis (Purple sea urchin).